The following is a 210-amino-acid chain: Probable glutathione S-transferase gst-36 (210 aa).

The GST N-terminal domain maps to 2 to 79 (PHFKFYYFDV…YLGHQFHRAG (78 aa)). Glutathione-binding positions include Tyr8, Trp39, Lys43, 49–51 (GQV), and 63–64 (QT). The GST C-terminal domain maps to 81–210 (NAVDCARLDM…YVSQRKATPA (130 aa)).

It belongs to the GST superfamily. Sigma family.

It catalyses the reaction RX + glutathione = an S-substituted glutathione + a halide anion + H(+). In terms of biological role, conjugation of reduced glutathione to a wide number of exogenous and endogenous hydrophobic electrophiles. In Caenorhabditis elegans, this protein is Probable glutathione S-transferase gst-36 (gst-36).